Consider the following 235-residue polypeptide: tRNA pseudouridine synthase B (235 aa).

Asp-45 (nucleophile) is an active-site residue.

It belongs to the pseudouridine synthase TruB family. Type 1 subfamily.

It carries out the reaction uridine(55) in tRNA = pseudouridine(55) in tRNA. Responsible for synthesis of pseudouridine from uracil-55 in the psi GC loop of transfer RNAs. The protein is tRNA pseudouridine synthase B of Chlamydia pneumoniae (Chlamydophila pneumoniae).